We begin with the raw amino-acid sequence, 467 residues long: Argininosuccinate lyase (467 aa).

The 2-(N(omega)-L-arginino)succinate site is built by Ser-27, Asn-114, and Thr-159. The active-site Proton acceptor is the His-160. The active-site Proton donor is Ser-281. 4 residues coordinate 2-(N(omega)-L-arginino)succinate: Asn-289, Tyr-321, Gln-326, and Lys-329.

This sequence belongs to the lyase 1 family. Argininosuccinate lyase subfamily. Homotetramer.

It carries out the reaction 2-(N(omega)-L-arginino)succinate = fumarate + L-arginine. It functions in the pathway amino-acid biosynthesis; L-arginine biosynthesis; L-arginine from L-ornithine and carbamoyl phosphate: step 3/3. It participates in nitrogen metabolism; urea cycle; L-arginine and fumarate from (N(omega)-L-arginino)succinate: step 1/1. In Aquarana catesbeiana (American bullfrog), this protein is Argininosuccinate lyase (ASL).